We begin with the raw amino-acid sequence, 619 residues long: ATP-dependent zinc metalloprotease FtsH (619 aa).

Topologically, residues Met1–Lys5 are cytoplasmic. The chain crosses the membrane as a helical span at residues Gly6 to Ala26. Residues Thr27–Trp110 lie on the Extracellular side of the membrane. A helical transmembrane segment spans residues Val111–Ile131. Residues Gln132–Gly619 are Cytoplasmic-facing. Gly204 to Thr211 provides a ligand contact to ATP. His426 provides a ligand contact to Zn(2+). The active site involves Glu427. Zn(2+) is bound by residues His430 and Asp502.

The protein in the central section; belongs to the AAA ATPase family. It in the C-terminal section; belongs to the peptidase M41 family. Homohexamer. The cofactor is Zn(2+).

The protein localises to the cell membrane. Acts as a processive, ATP-dependent zinc metallopeptidase for both cytoplasmic and membrane proteins. Plays a role in the quality control of integral membrane proteins. This Ruminiclostridium cellulolyticum (strain ATCC 35319 / DSM 5812 / JCM 6584 / H10) (Clostridium cellulolyticum) protein is ATP-dependent zinc metalloprotease FtsH.